The following is a 292-amino-acid chain: 2,3-dihydroxybenzoate decarboxylase (292 aa).

Cys-263 is a catalytic residue.

Belongs to the metallo-dependent hydrolases superfamily. In terms of assembly, homotetramer.

It catalyses the reaction 2,3-dihydroxybenzoate + H(+) = catechol + CO2. It participates in aromatic compound metabolism; benzoate degradation via hydroxylation. The polypeptide is 2,3-dihydroxybenzoate decarboxylase (Aspergillus niger).